The chain runs to 23 residues: Thymidine phosphorylase (23 aa).

It belongs to the thymidine/pyrimidine-nucleoside phosphorylase family. In terms of assembly, homodimer.

The catalysed reaction is thymidine + phosphate = 2-deoxy-alpha-D-ribose 1-phosphate + thymine. The enzymes which catalyze the reversible phosphorolysis of pyrimidine nucleosides are involved in the degradation of these compounds and in their utilization as carbon and energy sources, or in the rescue of pyrimidine bases for nucleotide synthesis. This Lacticaseibacillus rhamnosus (Lactobacillus rhamnosus) protein is Thymidine phosphorylase (deoA).